The chain runs to 443 residues: Glutamyl-tRNA reductase (443 aa).

Substrate is bound by residues 49–52 (TCNR), Ser-109, 114–116 (EPQ), and Gln-120. Cys-50 acts as the Nucleophile in catalysis. An NADP(+)-binding site is contributed by 189-194 (GAGKMC). The tract at residues 421–443 (PDSQQTGGDSVEKDADSKQDLTS) is disordered. A compositionally biased stretch (basic and acidic residues) spans 430-443 (SVEKDADSKQDLTS).

Belongs to the glutamyl-tRNA reductase family. In terms of assembly, homodimer.

The enzyme catalyses (S)-4-amino-5-oxopentanoate + tRNA(Glu) + NADP(+) = L-glutamyl-tRNA(Glu) + NADPH + H(+). The protein operates within porphyrin-containing compound metabolism; protoporphyrin-IX biosynthesis; 5-aminolevulinate from L-glutamyl-tRNA(Glu): step 1/2. In terms of biological role, catalyzes the NADPH-dependent reduction of glutamyl-tRNA(Glu) to glutamate 1-semialdehyde (GSA). The sequence is that of Glutamyl-tRNA reductase from Syntrophotalea carbinolica (strain DSM 2380 / NBRC 103641 / GraBd1) (Pelobacter carbinolicus).